The following is a 239-amino-acid chain: MNSNTHAKSSNFHQSELDKFAALANRWWDADGPQKPLHALNPVRLEYVSTRLELAGARVLDVGCGGGLLSESMARLGAQVTAIDLAPELVKVARLHSLESGVQVDYRVQSVEDLAAEQPGSFDTVTCMEMLEHVPDPTAIIRACASLLKPGGKLFLSTLNRTPAAFALAVVGAEYIARLLPKGTHHYKDFIKPAELAAWLRNAGLQLEDVSGMLYEPWRNRARLSSRTEVNYLAYAVKP.

S-adenosyl-L-methionine is bound by residues arginine 44, glycine 63, aspartate 84, and methionine 128.

It belongs to the methyltransferase superfamily. UbiG/COQ3 family.

The catalysed reaction is a 3-demethylubiquinol + S-adenosyl-L-methionine = a ubiquinol + S-adenosyl-L-homocysteine + H(+). It catalyses the reaction a 3-(all-trans-polyprenyl)benzene-1,2-diol + S-adenosyl-L-methionine = a 2-methoxy-6-(all-trans-polyprenyl)phenol + S-adenosyl-L-homocysteine + H(+). It functions in the pathway cofactor biosynthesis; ubiquinone biosynthesis. In terms of biological role, O-methyltransferase that catalyzes the 2 O-methylation steps in the ubiquinone biosynthetic pathway. In Xanthomonas euvesicatoria pv. vesicatoria (strain 85-10) (Xanthomonas campestris pv. vesicatoria), this protein is Ubiquinone biosynthesis O-methyltransferase.